The following is a 493-amino-acid chain: Succinate-semialdehyde dehydrogenase [NADP(+)] 2 (493 aa).

242–247 (GSTNVG) is a binding site for NAD(+). E264 is an active-site residue. C298 functions as the Nucleophile in the catalytic mechanism.

This sequence belongs to the aldehyde dehydrogenase family. In terms of assembly, homotetramer.

The protein resides in the cytoplasm. It carries out the reaction succinate semialdehyde + NAD(+) + H2O = succinate + NADH + 2 H(+). It catalyses the reaction succinate semialdehyde + NADP(+) + H2O = succinate + NADPH + 2 H(+). Its pathway is amino-acid degradation; 4-aminobutanoate degradation. Functionally, catalyzes the oxidation of succinate semialdehyde to succinate. Can utilize both NAD(+) or NADP(+) as a coenzyme. Functions in the GABA shunt, which allows to bypass 2 reactions in the TCA cycle by removing alpha-ketoglutarate from the cycle and feeding succinate and NADH back into the cycle. This chain is Succinate-semialdehyde dehydrogenase [NADP(+)] 2 (ssd2), found in Schizosaccharomyces pombe (strain 972 / ATCC 24843) (Fission yeast).